The following is a 207-amino-acid chain: Guanylate kinase (207 aa).

Residues 5-184 enclose the Guanylate kinase-like domain; it reads GNLFIVSAPS…ALADLSAIIR (180 aa). 12–19 serves as a coordination point for ATP; that stretch reads APSGAGKS. The interval 30 to 49 is disordered; it reads PSDKQVSVSHTTRKPRPGEV.

Belongs to the guanylate kinase family.

Its subcellular location is the cytoplasm. The catalysed reaction is GMP + ATP = GDP + ADP. Its function is as follows. Essential for recycling GMP and indirectly, cGMP. The protein is Guanylate kinase of Shewanella frigidimarina (strain NCIMB 400).